The chain runs to 400 residues: Phosphoglycerate kinase (400 aa).

Substrate is bound by residues 19–21 (DLN), Arg38, 61–64 (HLGR), Arg124, and Arg161. ATP contacts are provided by residues Lys211, Gly299, Glu330, and 356-359 (GGDS).

It belongs to the phosphoglycerate kinase family. As to quaternary structure, monomer.

The protein resides in the cytoplasm. The catalysed reaction is (2R)-3-phosphoglycerate + ATP = (2R)-3-phospho-glyceroyl phosphate + ADP. The protein operates within carbohydrate degradation; glycolysis; pyruvate from D-glyceraldehyde 3-phosphate: step 2/5. This Frankia alni (strain DSM 45986 / CECT 9034 / ACN14a) protein is Phosphoglycerate kinase.